The chain runs to 236 residues: uncharacterized protein (236 aa).

The RPE1 insert domain maps to 117–160 (RYLSKQTDRNEFITTAESYIGISKHKSTNITYKLPLKEQFCNMS).

This is an uncharacterized protein from Rickettsia prowazekii (strain Madrid E).